We begin with the raw amino-acid sequence, 308 residues long: Very-long-chain enoyl-CoA reductase (308 aa).

At 1–86 (MKHYEVEILD…YFRDLGAQIS (86 aa)) the chain is on the cytoplasmic side. K22 carries the post-translational modification N6-acetyllysine. Position 58 is a phosphoserine (S58). K60 bears the N6-acetyllysine mark. Residues 87-106 (WVTVFLTEYAGPLFIYLLFY) form a helical membrane-spanning segment. At 107–124 (FRVPFIYGHKYDFTSSRH) the chain is on the lumenal side. A helical transmembrane segment spans residues 125 to 147 (TVVHLACICHSFHYIKRLLETLF). The Cytoplasmic segment spans residues 148–158 (VHRFSHGTMPL). A helical membrane pass occupies residues 159 to 180 (RNIFKNCTYYWGFAAWMAYYIN). Topologically, residues 181–189 (HPLYTPPTY) are lumenal. The chain crosses the membrane as a helical span at residues 190-216 (GAQQVKLALAIFVICQLGNFSIHMALR). Residues 217–245 (DLRPAGSKTRKIPYPTKNPFTWLFLLVSC) are Cytoplasmic-facing. A helical membrane pass occupies residues 246-262 (PNYTYEVGSWIGFAIMT). The Lumenal segment spans residues 263-264 (QC). A helical transmembrane segment spans residues 265–292 (LPVALFSLVGFTQMTIWAKGKHRSYLKE). Over 293–308 (FRDYPPLRMPIIPFLL) the chain is Cytoplasmic.

This sequence belongs to the steroid 5-alpha reductase family. Interacts with ELOVL1 and LASS2. Interacts with HACD1 and HACD2 (via the third lumenal loop), but not with HACD3 and HACD4. Interacts with ELOVL1, ELOVL2, ELOVL3, ELOVL5 and ELOVL7 in the presence of acyl-CoA; interaction with HACD1/2 and that with ELOVLs are mutually exclusive. In terms of processing, glycosylated. In terms of tissue distribution, expressed in most tissues tested. Highly expressed in skeletal muscle.

Its subcellular location is the endoplasmic reticulum membrane. It carries out the reaction a very-long-chain 2,3-saturated fatty acyl-CoA + NADP(+) = a very-long-chain (2E)-enoyl-CoA + NADPH + H(+). The enzyme catalyses octadecanoyl-CoA + NADP(+) = (2E)-octadecenoyl-CoA + NADPH + H(+). The catalysed reaction is (2E,7Z,10Z,13Z,16Z)-docosapentaenoyl-CoA + NADPH + H(+) = (7Z,10Z,13Z,16Z)-docosatetraenoyl-CoA + NADP(+). It catalyses the reaction (2E,7Z,10Z,13Z,16Z,19Z)-docosahexaenoyl-CoA + NADPH + H(+) = (7Z,10Z,13Z,16Z,19Z)-docosapentaenoyl-CoA + NADP(+). It carries out the reaction (2E,8Z,11Z,14Z)-eicosatetraenoyl-CoA + NADPH + H(+) = (8Z,11Z,14Z)-eicosatrienoyl-CoA + NADP(+). The enzyme catalyses (2E)-hexadecenoyl-CoA + NADPH + H(+) = hexadecanoyl-CoA + NADP(+). It functions in the pathway lipid metabolism; fatty acid biosynthesis. The protein operates within lipid metabolism; sphingolipid metabolism. Functionally, involved in both the production of very long-chain fatty acids for sphingolipid synthesis and the degradation of the sphingosine moiety in sphingolipids through the sphingosine 1-phosphate metabolic pathway. Catalyzes the last of the four reactions of the long-chain fatty acids elongation cycle. This endoplasmic reticulum-bound enzymatic process, allows the addition of 2 carbons to the chain of long- and very long-chain fatty acids/VLCFAs per cycle. This enzyme reduces the trans-2,3-enoyl-CoA fatty acid intermediate to an acyl-CoA that can be further elongated by entering a new cycle of elongation. Thereby, it participates in the production of VLCFAs of different chain lengths that are involved in multiple biological processes as precursors of membrane lipids and lipid mediators. Catalyzes the saturation step of the sphingosine 1-phosphate metabolic pathway, the conversion of trans-2-hexadecenoyl-CoA to palmitoyl-CoA. The sequence is that of Very-long-chain enoyl-CoA reductase (TECR) from Homo sapiens (Human).